A 366-amino-acid chain; its full sequence is IgG receptor FcRn large subunit p51 (366 aa).

The N-terminal stretch at 1-22 (MGMSQPGVLLSLLLVLLPQTWG) is a signal peptide. The tract at residues 23–111 (AEPRLPLMYH…RTLENQINGT (89 aa)) is alpha-1. Over 23–298 (AEPRLPLMYH…VDLDSPARSS (276 aa)) the chain is Extracellular. N-linked (GlcNAc...) asparagine glycosylation is found at N109, N126, N150, and N247. Residues 112-201 (FTLQGLLGCE…ERGRQNLEWK (90 aa)) form an alpha-2 region. Disulfide bonds link C120–C183 and C222–C276. Residues 202–291 (EPPSMRLKAR…GLAQPLTVDL (90 aa)) are alpha-3. The Ig-like C1-type domain maps to 203–290 (PPSMRLKARP…EGLAQPLTVD (88 aa)). Residues 293–298 (SPARSS) are connecting peptide. The chain crosses the membrane as a helical span at residues 299 to 322 (VPVVGIILGLLLVVVAIAGGVLLW). Residues 323–366 (NRMRSGLPAPWLSLSGDDSGDLLPGGNLPPEAEPQGVNAFPATS) lie on the Cytoplasmic side of the membrane. S335 is modified (phosphoserine). A disordered region spans residues 344–366 (LLPGGNLPPEAEPQGVNAFPATS).

Belongs to the immunoglobulin superfamily. As to quaternary structure, fcRn complex consists of two subunits: p51, and p14 which is equivalent to beta-2-microglobulin. It forms an MHC class I-like heterodimer. Interacts with albumin/ALB; this interaction regulates ALB homeostasis. As to expression, intestinal epithelium.

It localises to the cell membrane. It is found in the endosome membrane. Its function is as follows. Cell surface receptor that transfers passive humoral immunity from the mother to the newborn. Binds to the Fc region of monomeric immunoglobulin gamma and mediates its selective uptake from milk. IgG in the milk is bound at the apical surface of the intestinal epithelium. The resultant FcRn-IgG complexes are transcytosed across the intestinal epithelium and IgG is released from FcRn into blood or tissue fluids. Throughout life, contributes to effective humoral immunity by recycling IgG and extending its half-life in the circulation. Mechanistically, monomeric IgG binding to FcRn in acidic endosomes of endothelial and hematopoietic cells recycles IgG to the cell surface where it is released into the circulation. In addition of IgG, regulates homeostasis of the other most abundant circulating protein albumin/ALB. The polypeptide is IgG receptor FcRn large subunit p51 (Fcgrt) (Rattus norvegicus (Rat)).